We begin with the raw amino-acid sequence, 677 residues long: Methionine--tRNA ligase (677 aa).

The 'HIGH' region signature appears at 15 to 25 (PYANGSIHLGH). Cys-146, Cys-149, Cys-159, and Cys-162 together coordinate Zn(2+). Positions 333–337 (KMSKS) match the 'KMSKS' region motif. An ATP-binding site is contributed by Lys-336. Residues 575 to 677 (DFAKIDLRVA…DGAKPGQQVK (103 aa)) enclose the tRNA-binding domain.

It belongs to the class-I aminoacyl-tRNA synthetase family. MetG type 1 subfamily. Homodimer. Requires Zn(2+) as cofactor.

It is found in the cytoplasm. It catalyses the reaction tRNA(Met) + L-methionine + ATP = L-methionyl-tRNA(Met) + AMP + diphosphate. Functionally, is required not only for elongation of protein synthesis but also for the initiation of all mRNA translation through initiator tRNA(fMet) aminoacylation. In Salmonella typhi, this protein is Methionine--tRNA ligase.